A 53-amino-acid chain; its full sequence is ATP synthase protein 8 (53 aa).

A helical membrane pass occupies residues 9–29 (WLILFFIFSITLVIFNILNYF).

It belongs to the ATPase protein 8 family. F-type ATPases have 2 components, CF(1) - the catalytic core - and CF(0) - the membrane proton channel.

Its subcellular location is the mitochondrion membrane. Functionally, mitochondrial membrane ATP synthase (F(1)F(0) ATP synthase or Complex V) produces ATP from ADP in the presence of a proton gradient across the membrane which is generated by electron transport complexes of the respiratory chain. F-type ATPases consist of two structural domains, F(1) - containing the extramembraneous catalytic core and F(0) - containing the membrane proton channel, linked together by a central stalk and a peripheral stalk. During catalysis, ATP synthesis in the catalytic domain of F(1) is coupled via a rotary mechanism of the central stalk subunits to proton translocation. Part of the complex F(0) domain. Minor subunit located with subunit a in the membrane. The protein is ATP synthase protein 8 (mt:ATPase8) of Anopheles quadrimaculatus (Common malaria mosquito).